A 394-amino-acid polypeptide reads, in one-letter code: Shematrin-like protein 2 (394 aa).

Positions Met1 to Ala19 are cleaved as a signal peptide.

Prismatic layer of shell (at protein level). Expressed primarily in the mantle with highest level in the mantle edge and lower level in the mantle pallium.

The protein resides in the secreted. The sequence is that of Shematrin-like protein 2 from Pinctada maxima (Silver-lipped pearl oyster).